Reading from the N-terminus, the 273-residue chain is Shikimate dehydrogenase (NADP(+)) (273 aa).

Shikimate contacts are provided by residues 14 to 16 and Thr61; that span reads SKS. Lys65 serves as the catalytic Proton acceptor. Glu77 is an NADP(+) binding site. Residues Asn86 and Asp102 each contribute to the shikimate site. Residues 126-130, 150-155, and Met214 contribute to the NADP(+) site; these read GAGGA and NRTLSK. Tyr216 contacts shikimate. Gly238 serves as a coordination point for NADP(+).

The protein belongs to the shikimate dehydrogenase family. In terms of assembly, homodimer.

It carries out the reaction shikimate + NADP(+) = 3-dehydroshikimate + NADPH + H(+). It functions in the pathway metabolic intermediate biosynthesis; chorismate biosynthesis; chorismate from D-erythrose 4-phosphate and phosphoenolpyruvate: step 4/7. Involved in the biosynthesis of the chorismate, which leads to the biosynthesis of aromatic amino acids. Catalyzes the reversible NADPH linked reduction of 3-dehydroshikimate (DHSA) to yield shikimate (SA). In Photobacterium profundum (strain SS9), this protein is Shikimate dehydrogenase (NADP(+)).